The chain runs to 218 residues: NAD(P)H-quinone oxidoreductase subunit I (218 aa).

2 consecutive 4Fe-4S ferredoxin-type domains span residues 55–84 and 95–124; these read GRIH…VDWV and RNYS…MTEE. Cys64, Cys67, Cys70, Cys74, Cys104, Cys107, Cys110, and Cys114 together coordinate [4Fe-4S] cluster. Residues 192-218 form a disordered region; it reads LSLQQDSLQGDEGESLQDAPDQDQPKG.

The protein belongs to the complex I 23 kDa subunit family. NDH-1 is composed of at least 11 different subunits. The cofactor is [4Fe-4S] cluster.

The protein resides in the cellular thylakoid membrane. The enzyme catalyses a plastoquinone + NADH + (n+1) H(+)(in) = a plastoquinol + NAD(+) + n H(+)(out). It carries out the reaction a plastoquinone + NADPH + (n+1) H(+)(in) = a plastoquinol + NADP(+) + n H(+)(out). Functionally, NDH-1 shuttles electrons from an unknown electron donor, via FMN and iron-sulfur (Fe-S) centers, to quinones in the respiratory and/or the photosynthetic chain. The immediate electron acceptor for the enzyme in this species is believed to be plastoquinone. Couples the redox reaction to proton translocation, and thus conserves the redox energy in a proton gradient. In Prochlorococcus marinus (strain MIT 9303), this protein is NAD(P)H-quinone oxidoreductase subunit I.